A 557-amino-acid chain; its full sequence is Urocanate hydratase (557 aa).

Residues 1 to 20 (MSNPRHNEREVRSPRGDELN) form a disordered region. Residues 52–53 (GG), Gln-130, 176–178 (GMG), Glu-196, Arg-201, 242–243 (NA), 263–267 (QTSAH), 273–274 (YL), and Tyr-322 each bind NAD(+). Cys-410 is a catalytic residue. An NAD(+)-binding site is contributed by Gly-492.

This sequence belongs to the urocanase family. Requires NAD(+) as cofactor.

The protein resides in the cytoplasm. It carries out the reaction 4-imidazolone-5-propanoate = trans-urocanate + H2O. It participates in amino-acid degradation; L-histidine degradation into L-glutamate; N-formimidoyl-L-glutamate from L-histidine: step 2/3. Functionally, catalyzes the conversion of urocanate to 4-imidazolone-5-propionate. The protein is Urocanate hydratase of Brucella canis (strain ATCC 23365 / NCTC 10854 / RM-666).